Here is a 386-residue protein sequence, read N- to C-terminus: NifS-like protein (386 aa).

Pyridoxal 5'-phosphate contacts are provided by residues 58 to 59 (SE) and 184 to 186 (SIN).

Belongs to the class-V pyridoxal-phosphate-dependent aminotransferase family. NifS/IscS subfamily. It depends on pyridoxal 5'-phosphate as a cofactor.

The protein localises to the virion. In Ornithodoros (relapsing fever ticks), this protein is NifS-like protein.